The following is a 145-amino-acid chain: uncharacterized protein (145 aa).

Helical transmembrane passes span 1–21, 28–48, 54–74, and 96–116; these read MELF…YFLI, TVLI…MGAL, SMTS…AYVM, and FFLI…IPSA.

It belongs to the DcuC/DcuD transporter (TC 2.A.61) family.

Its subcellular location is the cell membrane. This is an uncharacterized protein from Haemophilus influenzae (strain ATCC 51907 / DSM 11121 / KW20 / Rd).